The following is a 1163-amino-acid chain: MDRNREAEMELRRGPSPTRAGRGHEVDGDKATCHTCCICGKSFPFQSSLSQHMRKHTGEKPYKCPYCDHRASQKGNLKIHIRSHRTGTLIQGHEPEAGEAPLGEMRASEGLDACASPTKSASACNRLLNGASQADGARVLNGASQADSGRVLLRSSKKGAEGSACAPGEAKAAVQCSFCKSQFERKKDLELHVHQAHKPFKCRLCSYATLREESLLSHIERDHITAQGPGSGEACVENGKPELSPGEFPCEVCGQAFSQTWFLKAHMKKHRGSFDHGCHICGRRFKEPWFLKNHMKAHGPKTGSKNRPKSELDPIATINNVVQEEVIVAGLSLYEVCAKCGNLFTNLDSLNAHNAIHRRVEASRTRAPAEEGAEGPSDTKQFFLQCLNLRPSAAGDSCPGTQAGRRVAELDPVNSYQAWQLATRGKVAEPAEYLKYGAWDEALAGDVAFDKDRREYVLVSQEKRKREQDAPAAQGPPRKRASGPGDPAPAGHLDPRSAARPNRRAAATTGQGKSSECFECGKIFRTYHQMVLHSRVHRRARRERDSDGDRAARARCGSLSEGDSASQPSSPGSACAAADSPGSGLADEAAEDSGEEGAPEPAPGGQPRRCCFSEEVTSTELSSGDQSHKMGDNASERDTGESKAGIAASVSILENSSRETSRRQEQHRFSMDLKMPAFHPKQEVPVPGDGVEFPSSTGAEGQTGHPAEKLSDLHNKEHSGGGKRALAPDLMPLDLSARSTRDDPSNKETASSLQAALVVHPCPYCSHKTYYPEVLWMHKRIWHRVSCNSVAPPWIQPNGYKSIRSNLVFLSRSGRTGPPPALGGKECQPLLLARFTRTQVPGGMPGSKSGSSPLGVVTKAASMPKNKESHSGGPCALWAPGPDGYRQTKPCHGQEPHGAATQGPLAKPRQEASSKPVPAPGGGGFSRSATPTPTVIARAGAQPSANSKPVEKFGVPPAGAGFAPTNKHSAPDSLKAKFSAQPQGPPPAKGEGGAPPLPPREPPSKAAQELRTLATCAAGSRGDAALQAQPGVAGAPPVLHSIKQEPVAEGHEKRLDILNIFKTYIPKDFATLYQGWGVSGPGLEHRGTLRTQARPGEFVCIECGKSFHQPGHLRAHMRAHSVVFESDGPRGSEVHTTSADAPKQGRDHSNTGTVQTVPLRKGT.

Residues 1 to 13 (MDRNREAEMELRR) show a composition bias toward basic and acidic residues. A disordered region spans residues 1-26 (MDRNREAEMELRRGPSPTRAGRGHEV). The tract at residues 1 to 431 (MDRNREAEME…ATRGKVAEPA (431 aa)) is mediates promoter DNA-binding and activation of transcription. 7 C2H2-type zinc fingers span residues 34-56 (HTCC…MRKH), 62-84 (YKCP…IRSH), 174-197 (VQCS…HQAH), 200-223 (FKCR…ERDH), 248-270 (FPCE…MKKH), 276-298 (HGCH…MKAH), and 335-357 (EVCA…NAIH). Positions 460–469 (SQEKRKREQD) are enriched in basic and acidic residues. 3 disordered regions span residues 460-512 (SQEK…TGQG), 533-667 (HSRV…QEQH), and 679-730 (HPKQ…APDL). The span at 496-507 (RSAARPNRRAAA) shows a compositional bias: low complexity. Residues 515–537 (SECFECGKIFRTYHQMVLHSRVH) form a C2H2-type 8 zinc finger. Positions 542–552 (RERDSDGDRAA) are enriched in basic and acidic residues. Residues 561–572 (EGDSASQPSSPG) show a composition bias toward polar residues. Residues 588–598 (EAAEDSGEEGA) are compositionally biased toward acidic residues. Positions 615–625 (EVTSTELSSGD) are enriched in polar residues. The segment covering 626 to 641 (QSHKMGDNASERDTGE) has biased composition (basic and acidic residues). Residue Lys643 forms a Glycyl lysine isopeptide (Lys-Gly) (interchain with G-Cter in SUMO2) linkage. Basic and acidic residues predominate over residues 656–667 (SSRETSRRQEQH). Lys681 is covalently cross-linked (Glycyl lysine isopeptide (Lys-Gly) (interchain with G-Cter in SUMO2)). Over residues 706–720 (PAEKLSDLHNKEHSG) the composition is skewed to basic and acidic residues. A C2H2-type 9; atypical zinc finger spans residues 760–783 (HPCPYCSHKTYYPEVLWMHKRIWH). Positions 838–1007 (TQVPGGMPGS…PPREPPSKAA (170 aa)) are disordered. Residues 840–857 (VPGGMPGSKSGSSPLGVV) are compositionally biased toward low complexity. Residues Lys1043 and Lys1062 each participate in a glycyl lysine isopeptide (Lys-Gly) (interchain with G-Cter in SUMO2) cross-link. The C2H2-type 10 zinc-finger motif lies at 1098-1120 (FVCIECGKSFHQPGHLRAHMRAH). The disordered stretch occupies residues 1126–1163 (SDGPRGSEVHTTSADAPKQGRDHSNTGTVQTVPLRKGT).

The protein belongs to the krueppel C2H2-type zinc-finger protein family. As to quaternary structure, interacts with PRDM16; the interaction is direct and may play a role in the transcription of brown adipose tissue-specific genes. Interacts with PWWP2B. Interacts with HDAC1; this interaction is enhanced in the presence of PWWP2B.

It is found in the nucleus. Its function is as follows. Transcriptional regulator that binds to the promoter and activates the transcription of genes promoting brown adipose tissue (BAT) differentiation. Among brown adipose tissue-specific genes, binds the proximal region of the promoter of the UCP1 gene to activate its transcription and thereby regulate thermogenesis. May also play a role in the cellular response to replication stress. In Homo sapiens (Human), this protein is Zinc finger protein 516.